Reading from the N-terminus, the 436-residue chain is UPF0597 protein YhaM (436 aa).

This sequence belongs to the UPF0597 family.

The protein is UPF0597 protein YhaM of Escherichia coli O6:H1 (strain CFT073 / ATCC 700928 / UPEC).